The following is a 235-amino-acid chain: Elongation factor Tu, chloroplastic (235 aa).

The tr-type G domain maps to 1–125; it reads KNMITGAAQM…AVDEYIPTPV (125 aa). 47–50 contributes to the GTP binding site; that stretch reads NKQD.

This sequence belongs to the TRAFAC class translation factor GTPase superfamily. Classic translation factor GTPase family. EF-Tu/EF-1A subfamily.

Its subcellular location is the plastid. The protein localises to the chloroplast. The catalysed reaction is GTP + H2O = GDP + phosphate + H(+). Functionally, GTP hydrolase that promotes the GTP-dependent binding of aminoacyl-tRNA to the A-site of ribosomes during protein biosynthesis. This chain is Elongation factor Tu, chloroplastic (tufA), found in Gracilariopsis lemaneiformis (Red alga).